We begin with the raw amino-acid sequence, 145 residues long: Transthyretin (145 aa).

The first 20 residues, 1 to 20 (MASHRLFLLCLAGLVFMSEA), serve as a signal peptide directing secretion. Cys28 carries the post-translational modification Sulfocysteine. Lys33 contacts L-thyroxine. Residue Glu60 is modified to 4-carboxyglutamate. Ser70 is subject to Phosphoserine. Glu72 lines the L-thyroxine pocket. Asn116 carries an N-linked (GlcNAc...) asparagine glycan. Position 135 (Ser135) interacts with L-thyroxine.

Belongs to the transthyretin family. Homotetramer. Dimer of dimers. In the homotetramer, subunits assemble around a central channel that can accommodate two ligand molecules. Interacts with RBP4. In terms of processing, sulfonation of the reactive cysteine Cys-28 enhances the stability of the native conformation of TTR, avoiding misassembly of the protein leading to amyloid formation.

The protein localises to the secreted. In terms of biological role, thyroid hormone-binding protein. Probably transports thyroxine from the bloodstream to the brain. This chain is Transthyretin (TTR), found in Erinaceus europaeus (Western European hedgehog).